The primary structure comprises 206 residues: MARYIGPKCKLSRREGTDLFLKSGVRALESKCNIEAAPGIHGQRRGRQSDYGTQLREKQKVRRIYGVLERQFSGYYKQAASQKGATGENLLQLLECRLDNVVYRMGFGATRAESRQLVSHKAISVNGQTVNVPSYQVKAGDVVAVREKSKNQLRIAQALELCAQRGRVEWVEVDAEKKSGVFKNVPARGDLSADINESLIVELYSK.

The region spanning 96-156 (CRLDNVVYRM…EKSKNQLRIA (61 aa)) is the S4 RNA-binding domain.

It belongs to the universal ribosomal protein uS4 family. In terms of assembly, part of the 30S ribosomal subunit. Contacts protein S5. The interaction surface between S4 and S5 is involved in control of translational fidelity.

Functionally, one of the primary rRNA binding proteins, it binds directly to 16S rRNA where it nucleates assembly of the body of the 30S subunit. In terms of biological role, with S5 and S12 plays an important role in translational accuracy. This chain is Small ribosomal subunit protein uS4, found in Ectopseudomonas mendocina (strain ymp) (Pseudomonas mendocina).